Here is a 215-residue protein sequence, read N- to C-terminus: MPDSTSSASRGGVRIARGASPWLLPTVATAALSLARARKSGRWAAVAVPTTALAAGMLWFFRDPEREITDGRVISPADGVVQSIMPWKDGRTRVAIFMSPLNVHVNRAPLAGTVTSVEHIPGGFVPAFNKESENNERVVWHFDTELGDIEMVQIAGAVARRIVPYLPEGTKVEQGERIGLIRFGSRVDIYLPEGIDVAVEVGQATTAGVTRIDRD.

Serine 185 serves as the catalytic Schiff-base intermediate with substrate; via pyruvic acid. Position 185 is a pyruvic acid (Ser); by autocatalysis (serine 185).

It belongs to the phosphatidylserine decarboxylase family. PSD-A subfamily. In terms of assembly, heterodimer of a large membrane-associated beta subunit and a small pyruvoyl-containing alpha subunit. Pyruvate serves as cofactor. Post-translationally, is synthesized initially as an inactive proenzyme. Formation of the active enzyme involves a self-maturation process in which the active site pyruvoyl group is generated from an internal serine residue via an autocatalytic post-translational modification. Two non-identical subunits are generated from the proenzyme in this reaction, and the pyruvate is formed at the N-terminus of the alpha chain, which is derived from the carboxyl end of the proenzyme. The post-translation cleavage follows an unusual pathway, termed non-hydrolytic serinolysis, in which the side chain hydroxyl group of the serine supplies its oxygen atom to form the C-terminus of the beta chain, while the remainder of the serine residue undergoes an oxidative deamination to produce ammonia and the pyruvoyl prosthetic group on the alpha chain.

It is found in the cell membrane. The enzyme catalyses a 1,2-diacyl-sn-glycero-3-phospho-L-serine + H(+) = a 1,2-diacyl-sn-glycero-3-phosphoethanolamine + CO2. Its pathway is phospholipid metabolism; phosphatidylethanolamine biosynthesis; phosphatidylethanolamine from CDP-diacylglycerol: step 2/2. In terms of biological role, catalyzes the formation of phosphatidylethanolamine (PtdEtn) from phosphatidylserine (PtdSer). In Streptomyces griseus subsp. griseus (strain JCM 4626 / CBS 651.72 / NBRC 13350 / KCC S-0626 / ISP 5235), this protein is Phosphatidylserine decarboxylase proenzyme.